The following is a 313-amino-acid chain: Cytochrome f (313 aa).

The N-terminal stretch at 1–31 (MQNMFSFLSNKKIIALFLIIGTIFMPLSSEA) is a signal peptide. Tyr-32, Cys-52, Cys-55, and His-56 together coordinate heme. Residues 279-298 (IKWLIAFLILSTLGQVFLVL) form a helical membrane-spanning segment.

It belongs to the cytochrome f family. The 4 large subunits of the cytochrome b6-f complex are cytochrome b6, subunit IV (17 kDa polypeptide, petD), cytochrome f and the Rieske protein, while the 4 small subunits are PetG, PetL, PetM and PetN. The complex functions as a dimer. Requires heme as cofactor.

The protein localises to the plastid. The protein resides in the chloroplast thylakoid membrane. Functionally, component of the cytochrome b6-f complex, which mediates electron transfer between photosystem II (PSII) and photosystem I (PSI), cyclic electron flow around PSI, and state transitions. In Mesostigma viride (Green alga), this protein is Cytochrome f (petA).